The sequence spans 82 residues: Sec-independent protein translocase protein TatA (82 aa).

A helical transmembrane segment spans residues 1 to 21 (MGSLSIWHWLIVGAVVLLVFG). The interval 43-82 (GLSEDEEKAEAKPVGEPSLRSLDHQGAGDPLKTPDARKIG) is disordered.

Belongs to the TatA/E family. The Tat system comprises two distinct complexes: a TatABC complex, containing multiple copies of TatA, TatB and TatC subunits, and a separate TatA complex, containing only TatA subunits. Substrates initially bind to the TatABC complex, which probably triggers association of the separate TatA complex to form the active translocon.

The protein localises to the cell inner membrane. Part of the twin-arginine translocation (Tat) system that transports large folded proteins containing a characteristic twin-arginine motif in their signal peptide across membranes. TatA could form the protein-conducting channel of the Tat system. The polypeptide is Sec-independent protein translocase protein TatA (Methylocella silvestris (strain DSM 15510 / CIP 108128 / LMG 27833 / NCIMB 13906 / BL2)).